Here is a 392-residue protein sequence, read N- to C-terminus: S-adenosylmethionine synthase (392 aa).

Histidine 22 provides a ligand contact to ATP. Aspartate 24 is a Mg(2+) binding site. Glutamate 50 contributes to the K(+) binding site. Residues glutamate 63 and glutamine 106 each coordinate L-methionine. Residues 106–116 (QSPDITQGVTL) are flexible loop. ATP-binding positions include 170–172 (DGK), 236–237 (KF), aspartate 245, 251–252 (RK), alanine 268, and lysine 272. Aspartate 245 is an L-methionine binding site. Lysine 276 lines the L-methionine pocket.

Belongs to the AdoMet synthase family. In terms of assembly, homotetramer; dimer of dimers. Mg(2+) is required as a cofactor. The cofactor is K(+).

The protein localises to the cytoplasm. The enzyme catalyses L-methionine + ATP + H2O = S-adenosyl-L-methionine + phosphate + diphosphate. Its pathway is amino-acid biosynthesis; S-adenosyl-L-methionine biosynthesis; S-adenosyl-L-methionine from L-methionine: step 1/1. In terms of biological role, catalyzes the formation of S-adenosylmethionine (AdoMet) from methionine and ATP. The overall synthetic reaction is composed of two sequential steps, AdoMet formation and the subsequent tripolyphosphate hydrolysis which occurs prior to release of AdoMet from the enzyme. This chain is S-adenosylmethionine synthase, found in Sulfurimonas denitrificans (strain ATCC 33889 / DSM 1251) (Thiomicrospira denitrificans (strain ATCC 33889 / DSM 1251)).